Reading from the N-terminus, the 339-residue chain is Putative ABC transporter ATP-binding protein MG467 homolog (339 aa).

Residues 41–87 (KKTKKAKPAKVKKVKEPKAKAVKPEQVKPTKTTKAPKPKKPKKQGGL) are disordered. Basic residues predominate over residues 42 to 53 (KTKKAKPAKVKK). Over residues 54–68 (VKEPKAKAVKPEQVK) the composition is skewed to basic and acidic residues. Residues 74–83 (KAPKPKKPKK) show a composition bias toward basic residues. Residues 112–338 (ISIDKMWKHV…IVSNELVRPL (227 aa)) form the ABC transporter domain. ATP is bound at residue 150-157 (GPSGSGKT).

The protein belongs to the ABC transporter superfamily.

This Mycoplasma pneumoniae (strain ATCC 29342 / M129 / Subtype 1) (Mycoplasmoides pneumoniae) protein is Putative ABC transporter ATP-binding protein MG467 homolog.